The sequence spans 255 residues: Complement C1q-like protein 3 (255 aa).

The N-terminal stretch at 1-20 is a signal peptide; that stretch reads MVLLLVILIPVLVSSAGTSA. Residues 39-109 are disordered; sequence KAPSTAATPD…GLPGPPGAPG (71 aa). The Collagen-like domain maps to 61-111; it reads GPKGEAGRPGKAGPRGPPGEPGPPGPMGPPGEKGEPGRQGLPGPPGAPGLN. Residues 75 to 89 show a composition bias toward pro residues; sequence RGPPGEPGPPGPMGP. The region spanning 122-255 is the C1q domain; the sequence is STVPKIAFYA…TFSGFIIYAD (134 aa).

In terms of assembly, forms homooligomers. Interacts with ADGRB3. Interacts with C1QL2 and C1QL4, when proteins are coexpressed; this interaction does not occur after secretion. As to expression, highly expressed in adipose tissue, with expression levels at least 2 orders of magnitude higher than in other tissues, including brain and kidney.

The protein localises to the secreted. Functionally, may regulate the number of excitatory synapses that are formed on hippocampus neurons. Has no effect on inhibitory synapses. Plays a role in glucose homeostasis. Via AMPK signaling pathway, stimulates glucose uptake in adipocytes, myotubes and hepatocytes and enhances insulin-stimulated glucose uptake. In a hepatoma cell line, reduces the expression of gluconeogenic enzymes G6PC1 and PCK1 and hence decreases de novo glucose production. The sequence is that of Complement C1q-like protein 3 (C1QL3) from Homo sapiens (Human).